Reading from the N-terminus, the 368-residue chain is Agmatine deiminase (368 aa).

Catalysis depends on Cys-357, which acts as the Amidino-cysteine intermediate.

This sequence belongs to the agmatine deiminase family. In terms of assembly, homodimer.

It catalyses the reaction agmatine + H2O = N-carbamoylputrescine + NH4(+). It participates in amine and polyamine biosynthesis; putrescine biosynthesis via agmatine pathway; N-carbamoylputrescine from agmatine: step 1/1. In terms of biological role, mediates the hydrolysis of agmatine into N-carbamoylputrescine in the arginine decarboxylase (ADC) pathway of putrescine biosynthesis, a basic polyamine. In Pseudomonas savastanoi pv. phaseolicola (strain 1448A / Race 6) (Pseudomonas syringae pv. phaseolicola (strain 1448A / Race 6)), this protein is Agmatine deiminase.